Here is an 81-residue protein sequence, read N- to C-terminus: Photosystem I iron-sulfur center (81 aa).

4Fe-4S ferredoxin-type domains are found at residues 2 to 31 (SHSVKIYDTCIGCTQCVRACPTDVLEMIPW) and 39 to 68 (IASAPRTEDCVGCKRCESACPTDFLSVRVY). The [4Fe-4S] cluster site is built by cysteine 11, cysteine 14, cysteine 17, cysteine 21, cysteine 48, cysteine 51, cysteine 54, and cysteine 58.

In terms of assembly, the eukaryotic PSI reaction center is composed of at least 11 subunits. Requires [4Fe-4S] cluster as cofactor.

It localises to the plastid. The protein resides in the chloroplast thylakoid membrane. The catalysed reaction is reduced [plastocyanin] + hnu + oxidized [2Fe-2S]-[ferredoxin] = oxidized [plastocyanin] + reduced [2Fe-2S]-[ferredoxin]. Functionally, apoprotein for the two 4Fe-4S centers FA and FB of photosystem I (PSI); essential for photochemical activity. FB is the terminal electron acceptor of PSI, donating electrons to ferredoxin. The C-terminus interacts with PsaA/B/D and helps assemble the protein into the PSI complex. Required for binding of PsaD and PsaE to PSI. PSI is a plastocyanin-ferredoxin oxidoreductase, converting photonic excitation into a charge separation, which transfers an electron from the donor P700 chlorophyll pair to the spectroscopically characterized acceptors A0, A1, FX, FA and FB in turn. The polypeptide is Photosystem I iron-sulfur center (Phalaenopsis aphrodite subsp. formosana (Moth orchid)).